The following is a 320-amino-acid chain: Methenyltetrahydromethanopterin cyclohydrolase (320 aa).

This sequence belongs to the MCH family.

It is found in the cytoplasm. The catalysed reaction is 5,10-methenyl-5,6,7,8-tetrahydromethanopterin + H2O = N(5)-formyl-5,6,7,8-tetrahydromethanopterin + H(+). In terms of biological role, catalyzes the hydrolysis of methenyl-H(4)MPT(+) to 5-formyl-H(4)MPT. This Methanococcoides burtonii (strain DSM 6242 / NBRC 107633 / OCM 468 / ACE-M) protein is Methenyltetrahydromethanopterin cyclohydrolase.